The sequence spans 355 residues: Phosphoribosylformylglycinamidine cyclo-ligase (355 aa).

The protein belongs to the AIR synthase family.

The protein localises to the cytoplasm. The enzyme catalyses 2-formamido-N(1)-(5-O-phospho-beta-D-ribosyl)acetamidine + ATP = 5-amino-1-(5-phospho-beta-D-ribosyl)imidazole + ADP + phosphate + H(+). Its pathway is purine metabolism; IMP biosynthesis via de novo pathway; 5-amino-1-(5-phospho-D-ribosyl)imidazole from N(2)-formyl-N(1)-(5-phospho-D-ribosyl)glycinamide: step 2/2. In Paraburkholderia xenovorans (strain LB400), this protein is Phosphoribosylformylglycinamidine cyclo-ligase.